The following is a 264-amino-acid chain: Thymidylate synthase (264 aa).

DUMP is bound at residue R21. H51 lines the (6R)-5,10-methylene-5,6,7,8-tetrahydrofolate pocket. R126–R127 is a dUMP binding site. C146 serves as the catalytic Nucleophile. DUMP is bound by residues R166–D169, N177, and H207–Y209. Residue D169 coordinates (6R)-5,10-methylene-5,6,7,8-tetrahydrofolate. A (6R)-5,10-methylene-5,6,7,8-tetrahydrofolate-binding site is contributed by A263.

This sequence belongs to the thymidylate synthase family. Bacterial-type ThyA subfamily. As to quaternary structure, homodimer.

The protein resides in the cytoplasm. The enzyme catalyses dUMP + (6R)-5,10-methylene-5,6,7,8-tetrahydrofolate = 7,8-dihydrofolate + dTMP. It functions in the pathway pyrimidine metabolism; dTTP biosynthesis. Functionally, catalyzes the reductive methylation of 2'-deoxyuridine-5'-monophosphate (dUMP) to 2'-deoxythymidine-5'-monophosphate (dTMP) while utilizing 5,10-methylenetetrahydrofolate (mTHF) as the methyl donor and reductant in the reaction, yielding dihydrofolate (DHF) as a by-product. This enzymatic reaction provides an intracellular de novo source of dTMP, an essential precursor for DNA biosynthesis. The sequence is that of Thymidylate synthase from Salmonella paratyphi C (strain RKS4594).